Here is a 220-residue protein sequence, read N- to C-terminus: MLRIIDTETCGLQGGIVEIASVDVIDGKIVNPMSHLVRPDRPISPQAMAIHRITEAMVADKPWIEDVIPHYYGSEWYVAHNASFDRRVLPEMPGEWICTMKLARRLWPGIKYSNMALYKTRKLNVQTPPGLHHHRALYDCYITAALLIDIMNTSGWTAEQMADITGRPSLMTTFTFGKYRGKAVSDVAERDPGYLRWLFNNLDSMSPELRLTLKHYLENT.

The cofactor is Mg(2+).

Capable of degrading both single-strand and double-strand DNA with 3' to 5' polarity. Has higher affinity for ssDNA ends than for dsDNA. In Escherichia coli O6:H1 (strain CFT073 / ATCC 700928 / UPEC), this protein is Exodeoxyribonuclease 10 (exoX).